The primary structure comprises 350 residues: Ion-translocating oxidoreductase complex subunit D (350 aa).

3 helical membrane passes run 25 to 45 (ALCLIPGILVQTLFFGFGSLI), 89 to 109 (IPPLAPWWLVVIGSLFAIIIV), and 124 to 144 (AMAGYVVLLVSFPLQMTSWVA). Position 185 is an FMN phosphoryl threonine (Thr185). A run of 5 helical transmembrane segments spans residues 212–232 (SYGVGWFWVNLAYLAGGLVLL), 239–259 (WHISVGILAALFVCASFGFLI), 265–285 (VSPLFHWFSGGTMLAVFFIAT), 298–318 (LIFGASIGIIIYLIRTYGGYP), and 319–339 (DAVAFAVLLANMCAPFIDHYV).

It belongs to the NqrB/RnfD family. As to quaternary structure, the complex is composed of six subunits: RnfA, RnfB, RnfC, RnfD, RnfE and RnfG. Requires FMN as cofactor.

Its subcellular location is the cell inner membrane. Functionally, part of a membrane-bound complex that couples electron transfer with translocation of ions across the membrane. This is Ion-translocating oxidoreductase complex subunit D from Shewanella denitrificans (strain OS217 / ATCC BAA-1090 / DSM 15013).